Consider the following 518-residue polypeptide: Bifunctional purine biosynthesis protein PurH (518 aa).

In terms of domain architecture, MGS-like spans Met-1–Thr-146.

Belongs to the PurH family.

It catalyses the reaction (6R)-10-formyltetrahydrofolate + 5-amino-1-(5-phospho-beta-D-ribosyl)imidazole-4-carboxamide = 5-formamido-1-(5-phospho-D-ribosyl)imidazole-4-carboxamide + (6S)-5,6,7,8-tetrahydrofolate. It carries out the reaction IMP + H2O = 5-formamido-1-(5-phospho-D-ribosyl)imidazole-4-carboxamide. Its pathway is purine metabolism; IMP biosynthesis via de novo pathway; 5-formamido-1-(5-phospho-D-ribosyl)imidazole-4-carboxamide from 5-amino-1-(5-phospho-D-ribosyl)imidazole-4-carboxamide (10-formyl THF route): step 1/1. The protein operates within purine metabolism; IMP biosynthesis via de novo pathway; IMP from 5-formamido-1-(5-phospho-D-ribosyl)imidazole-4-carboxamide: step 1/1. This Prochlorococcus marinus (strain MIT 9211) protein is Bifunctional purine biosynthesis protein PurH.